A 316-amino-acid polypeptide reads, in one-letter code: L-lactate dehydrogenase (316 aa).

Residues valine 15, aspartate 37, lysine 42, tyrosine 68, and 82 to 83 (GL) contribute to the NAD(+) site. Residues glutamine 85, arginine 91, and 123 to 126 (NPVD) contribute to the substrate site. NAD(+)-binding positions include 121-123 (ASN) and threonine 146. 151 to 154 (DTSR) is a binding site for substrate. Arginine 156 and histidine 171 together coordinate beta-D-fructose 1,6-bisphosphate. The Proton acceptor role is filled by histidine 178. Position 222 is a phosphotyrosine (tyrosine 222). Threonine 231 serves as a coordination point for substrate.

It belongs to the LDH/MDH superfamily. LDH family. Homotetramer.

It localises to the cytoplasm. It catalyses the reaction (S)-lactate + NAD(+) = pyruvate + NADH + H(+). The protein operates within fermentation; pyruvate fermentation to lactate; (S)-lactate from pyruvate: step 1/1. Allosterically activated by fructose 1,6-bisphosphate (FBP). Catalyzes the conversion of lactate to pyruvate. This Borreliella burgdorferi (strain ATCC 35210 / DSM 4680 / CIP 102532 / B31) (Borrelia burgdorferi) protein is L-lactate dehydrogenase.